The chain runs to 312 residues: Glycerol-3-phosphate dehydrogenase [NAD(P)+] (312 aa).

Residues tryptophan 11, arginine 30, arginine 31, and lysine 95 each coordinate NADPH. 3 residues coordinate sn-glycerol 3-phosphate: lysine 95, glycine 123, and serine 125. Alanine 127 contributes to the NADPH binding site. Positions 177, 230, 240, 241, and 242 each coordinate sn-glycerol 3-phosphate. Lysine 177 (proton acceptor) is an active-site residue. Residue arginine 241 coordinates NADPH. NADPH-binding residues include valine 265 and glutamate 267.

It belongs to the NAD-dependent glycerol-3-phosphate dehydrogenase family.

The protein resides in the cytoplasm. The catalysed reaction is sn-glycerol 3-phosphate + NAD(+) = dihydroxyacetone phosphate + NADH + H(+). It carries out the reaction sn-glycerol 3-phosphate + NADP(+) = dihydroxyacetone phosphate + NADPH + H(+). It participates in membrane lipid metabolism; glycerophospholipid metabolism. In terms of biological role, catalyzes the reduction of the glycolytic intermediate dihydroxyacetone phosphate (DHAP) to sn-glycerol 3-phosphate (G3P), the key precursor for phospholipid synthesis. The sequence is that of Glycerol-3-phosphate dehydrogenase [NAD(P)+] from Helicobacter pylori (strain P12).